Consider the following 578-residue polypeptide: Solute carrier family 15 member 3 (578 aa).

The span at 1 to 15 shows a compositional bias: basic and acidic residues; the sequence is MSAPRAEEQPSRSGE. The interval 1 to 27 is disordered; sequence MSAPRAEEQPSRSGERQPLVARGPRGP. A run of 5 helical transmembrane segments spans residues 33 to 53, 77 to 97, 102 to 122, 155 to 175, and 201 to 221; these read TAAA…FGVT, LLFL…ADVY, LTIS…LTTI, PYCA…ASSV, and WFYW…AFIE. N223 is a glycosylation site (N-linked (GlcNAc...) asparagine). Residues 232–252 traverse the membrane as a helical segment; that stretch reads IIVGLVGLAFFIFLFATPVFI. Positions 280 to 301 are disordered; the sequence is SRDSESAHLLPDQRSNQPGPSP. Residues 308–328 form a helical membrane-spanning segment; sequence FQVLVKILPVMVTLVPYWMVY. N353 carries N-linked (GlcNAc...) asparagine glycosylation. Transmembrane regions (helical) follow at residues 367-387 and 405-425; these read IPEA…IPVK and LQKM…AGVL. N436 carries N-linked (GlcNAc...) asparagine glycosylation. 3 consecutive transmembrane segments (helical) span residues 462 to 481, 494 to 514, and 538 to 558; these read YLLI…EFAY, GIFF…VALL, and YFFL…WIAG.

Belongs to the major facilitator superfamily. Proton-dependent oligopeptide transporter (POT/PTR) (TC 2.A.17) family. In terms of tissue distribution, expressed highly in bone marrow derived macrophages, and weakly in spleen and lung. Expressed in plasmacytoid dendritic cells (pDCs) in response to toll-like receptors (TLR) stimulation.

Its subcellular location is the lysosome membrane. It localises to the endosome membrane. It catalyses the reaction N-acetyl-D-muramoyl-L-alanyl-D-isoglutamine(out) + n H(+)(out) = N-acetyl-D-muramoyl-L-alanyl-D-isoglutamine(in) + n H(+)(in). It carries out the reaction glycylglycylglycine(out) + n H(+)(out) = glycylglycylglycine(in) + n H(+)(in). The enzyme catalyses carnosine(out) + n H(+)(out) = carnosine(in) + n H(+)(in). The catalysed reaction is L-histidine(out) + n H(+)(out) = L-histidine(in) + n H(+)(in). Its function is as follows. Proton-coupled amino-acid transporter that transports free histidine and certain di- and tripeptides, and is involved in innate immune response. Also able to transport carnosine. Involved in the detection of microbial pathogens by toll-like receptors (TLRs) and NOD-like receptors (NLRs), probably by mediating transport of bacterial peptidoglycans across the endolysosomal membrane: catalyzes the transport of certain bacterial peptidoglycans, such as muramyl dipeptide (MDP), the NOD2 ligand. The protein is Solute carrier family 15 member 3 of Mus musculus (Mouse).